A 367-amino-acid polypeptide reads, in one-letter code: Phospho-N-acetylmuramoyl-pentapeptide-transferase (367 aa).

A run of 10 helical transmembrane segments spans residues 16-36 (LLLA…WVHF), 62-82 (TMGG…FNLV), 87-107 (MLLP…DDWL), 125-145 (FWIM…PQPY), 158-178 (VGEV…IVFI), 190-210 (SLAG…TFLA), 214-234 (LTNL…FLWY), 240-260 (QVFM…VVAL), 264-284 (QWIL…STLI), and 326-346 (FVLI…IFGS).

The protein belongs to the glycosyltransferase 4 family. MraY subfamily. Mg(2+) is required as a cofactor.

The protein localises to the cell membrane. It catalyses the reaction UDP-N-acetyl-alpha-D-muramoyl-L-alanyl-gamma-D-glutamyl-meso-2,6-diaminopimeloyl-D-alanyl-D-alanine + di-trans,octa-cis-undecaprenyl phosphate = di-trans,octa-cis-undecaprenyl diphospho-N-acetyl-alpha-D-muramoyl-L-alanyl-D-glutamyl-meso-2,6-diaminopimeloyl-D-alanyl-D-alanine + UMP. Its pathway is cell wall biogenesis; peptidoglycan biosynthesis. Catalyzes the initial step of the lipid cycle reactions in the biosynthesis of the cell wall peptidoglycan: transfers peptidoglycan precursor phospho-MurNAc-pentapeptide from UDP-MurNAc-pentapeptide onto the lipid carrier undecaprenyl phosphate, yielding undecaprenyl-pyrophosphoryl-MurNAc-pentapeptide, known as lipid I. The polypeptide is Phospho-N-acetylmuramoyl-pentapeptide-transferase (Chloroflexus aggregans (strain MD-66 / DSM 9485)).